The chain runs to 79 residues: Bacteriochlorophyll c-binding protein (79 aa).

Position 25 (His25) interacts with a bacteriochlorophyll c.

This sequence belongs to the BChl C/E-binding protein family.

The protein resides in the chlorosome. The protein localises to the chlorosome envelope. Its function is as follows. Component of the photosynthetic apparatus. The light harvesting B740 complex binds bacteriochlorophyll c. The chain is Bacteriochlorophyll c-binding protein (csmA) from Chlorobaculum tepidum (strain ATCC 49652 / DSM 12025 / NBRC 103806 / TLS) (Chlorobium tepidum).